The chain runs to 186 residues: MSVTSIMDDLKRRMDGAISAFKHELSGLRTGRASASLLEPLTVEAYGSVVPIKQVANISVLEPRMLSVSVWDKTMVGAVERAIRDCGFGLNPIVDGMNLRIPLPELNEERRKELVKIAHQYAEQARVAIRHVRRDGMDNLKKLEKEGEISQDEARSLSEKVQKLTDDAIADIDKILIMKETEIMQV.

It belongs to the RRF family.

The protein localises to the cytoplasm. Functionally, responsible for the release of ribosomes from messenger RNA at the termination of protein biosynthesis. May increase the efficiency of translation by recycling ribosomes from one round of translation to another. The polypeptide is Ribosome-recycling factor (Bartonella bacilliformis (strain ATCC 35685 / KC583 / Herrer 020/F12,63)).